The chain runs to 532 residues: O-phosphoserine--tRNA(Cys) ligase (532 aa).

Residues 186-188 (HMT), 231-233 (SAS), 273-274 (YY), and N317 contribute to the substrate site.

This sequence belongs to the class-II aminoacyl-tRNA synthetase family. O-phosphoseryl-tRNA(Cys) synthetase subfamily. In terms of assembly, homotetramer. Interacts with SepCysS.

The catalysed reaction is tRNA(Cys) + O-phospho-L-serine + ATP = O-phospho-L-seryl-tRNA(Cys) + AMP + diphosphate. In terms of biological role, catalyzes the attachment of O-phosphoserine (Sep) to tRNA(Cys). This is O-phosphoserine--tRNA(Cys) ligase from Methanothermobacter thermautotrophicus (strain ATCC 29096 / DSM 1053 / JCM 10044 / NBRC 100330 / Delta H) (Methanobacterium thermoautotrophicum).